A 795-amino-acid polypeptide reads, in one-letter code: Lon protease 1 (795 aa).

The 196-residue stretch at 9–204 (LPVLPLRNTV…RVLALLLRDL (196 aa)) folds into the Lon N-terminal domain. 360–367 (GPPGVGKT) contributes to the ATP binding site. Residues 596–777 (EPQVGAAQGL…GEVLKLLLLP (182 aa)) enclose the Lon proteolytic domain. Active-site residues include serine 683 and lysine 726.

The protein belongs to the peptidase S16 family. As to quaternary structure, homohexamer. Organized in a ring with a central cavity.

It is found in the cytoplasm. It catalyses the reaction Hydrolysis of proteins in presence of ATP.. Functionally, ATP-dependent serine protease that mediates the selective degradation of mutant and abnormal proteins as well as certain short-lived regulatory proteins. Required for cellular homeostasis and for survival from DNA damage and developmental changes induced by stress. Degrades polypeptides processively to yield small peptide fragments that are 5 to 10 amino acids long. Binds to DNA in a double-stranded, site-specific manner. The sequence is that of Lon protease 1 from Thermus thermophilus (strain ATCC BAA-163 / DSM 7039 / HB27).